The chain runs to 340 residues: Cytosolic Fe-S cluster assembly factor NBP35 (340 aa).

Residues 1–41 (MPSLVDPVANKTDEGNNRTDLKAPEPEHCPGTESEEAGKAD) are disordered. Residues 11 to 30 (KTDEGNNRTDLKAPEPEHCP) are compositionally biased toward basic and acidic residues. 4 residues coordinate [4Fe-4S] cluster: cysteine 29, cysteine 43, cysteine 46, and cysteine 52. 82–89 (GKGGVGKS) provides a ligand contact to ATP. Residues cysteine 255 and cysteine 258 each coordinate [4Fe-4S] cluster.

This sequence belongs to the Mrp/NBP35 ATP-binding proteins family. NUBP1/NBP35 subfamily. As to quaternary structure, heterotetramer of 2 NBP35 and 2 CFD1 chains. [4Fe-4S] cluster serves as cofactor.

The protein resides in the cytoplasm. It localises to the nucleus. Its function is as follows. Component of the cytosolic iron-sulfur (Fe/S) protein assembly (CIA) machinery. Required for maturation of extramitochondrial Fe-S proteins. The NBP35-CFD1 heterotetramer forms a Fe-S scaffold complex, mediating the de novo assembly of an Fe-S cluster and its transfer to target apoproteins. Required for biogenesis and export of both ribosomal subunits, which may reflect a role in assembly of the Fe/S clusters in RLI1, a protein which performs rRNA processing and ribosome export. The protein is Cytosolic Fe-S cluster assembly factor NBP35 of Yarrowia lipolytica (strain CLIB 122 / E 150) (Yeast).